Here is a 987-residue protein sequence, read N- to C-terminus: Leucine--tRNA ligase (987 aa).

The 'HIGH' region motif lies at 69–80 (PYPSGKGLHVGH). Residues 760 to 764 (KMGKS) carry the 'KMSKS' region motif. Lysine 763 serves as a coordination point for ATP.

It belongs to the class-I aminoacyl-tRNA synthetase family.

It localises to the cytoplasm. It catalyses the reaction tRNA(Leu) + L-leucine + ATP = L-leucyl-tRNA(Leu) + AMP + diphosphate. This chain is Leucine--tRNA ligase, found in Bifidobacterium longum (strain NCC 2705).